The following is a 527-amino-acid chain: Bifunctional pantoate ligase/cytidylate kinase (527 aa).

Residues 1–277 (MRQLISPEAL…VGTARLIDNL (277 aa)) form a pantoate--beta-alanine ligase region. 27–34 (MGALHAGH) serves as a coordination point for ATP. Catalysis depends on His-34, which acts as the Proton donor. Position 58 (Gln-58) interacts with (R)-pantoate. Position 58 (Gln-58) interacts with beta-alanine. ATP is bound at residue 147–150 (GEKD). Gln-153 provides a ligand contact to (R)-pantoate. ATP contacts are provided by residues Val-176 and 184–187 (LSSR). Residues 278–527 (TLQGRRPIIA…GQTPSPLSLG (250 aa)) are cytidylate kinase. The segment at 507–527 (GLGDSSPQATPGQTPSPLSLG) is disordered. Polar residues predominate over residues 511–527 (SSPQATPGQTPSPLSLG).

The protein in the N-terminal section; belongs to the pantothenate synthetase family. In the C-terminal section; belongs to the cytidylate kinase family. Type 1 subfamily.

The protein localises to the cytoplasm. It carries out the reaction (R)-pantoate + beta-alanine + ATP = (R)-pantothenate + AMP + diphosphate + H(+). It catalyses the reaction CMP + ATP = CDP + ADP. The enzyme catalyses dCMP + ATP = dCDP + ADP. It functions in the pathway cofactor biosynthesis; (R)-pantothenate biosynthesis; (R)-pantothenate from (R)-pantoate and beta-alanine: step 1/1. Functionally, catalyzes the condensation of pantoate with beta-alanine in an ATP-dependent reaction via a pantoyl-adenylate intermediate. Catalyzes the transfer of a phosphate group from ATP to either CMP or dCMP to form CDP or dCDP and ADP, respectively. The chain is Bifunctional pantoate ligase/cytidylate kinase from Synechococcus elongatus (strain ATCC 33912 / PCC 7942 / FACHB-805) (Anacystis nidulans R2).